The following is a 229-amino-acid chain: Cytidylate kinase (229 aa).

12–20 contributes to the ATP binding site; it reads GPSGSGKGT.

It belongs to the cytidylate kinase family. Type 1 subfamily.

It localises to the cytoplasm. The enzyme catalyses CMP + ATP = CDP + ADP. It carries out the reaction dCMP + ATP = dCDP + ADP. This chain is Cytidylate kinase, found in Stutzerimonas stutzeri (strain A1501) (Pseudomonas stutzeri).